Consider the following 530-residue polypeptide: Pre-mRNA-splicing factor PRP9 (530 aa).

A Matrin-type 1 zinc finger spans residues 280–310; that stretch reads IYCPFCSRWFKTSSVFESHLVGKIHKKNESK. The interval 367–388 is disordered; that stretch reads DSTEKEGAEQVDGEQRDGQLQE. A compositionally biased stretch (basic and acidic residues) spans 368–388; the sequence is STEKEGAEQVDGEQRDGQLQE. The segment at 421 to 452 adopts a Matrin-type 2 zinc-finger fold; sequence YRCEICSNKVYNGRRTFERHFNEERHIYHLRC. Residues 488 to 516 are disordered; sequence AVPPKPNPSQLKVPTELELEEEDEEGNVM. Residues 504–513 show a composition bias toward acidic residues; the sequence is LELEEEDEEG.

The protein belongs to the SF3A3 family. Belongs to the CWC complex (or CEF1-associated complex), a spliceosome sub-complex reminiscent of a late-stage spliceosome composed of the U2, U5 and U6 snRNAs and at least BUD13, BUD31, BRR2, CDC40, CEF1, CLF1, CUS1, CWC2, CWC15, CWC21, CWC22, CWC23, CWC24, CWC25, CWC27, ECM2, HSH155, IST3, ISY1, LEA1, MSL1, NTC20, PRP8, PRP9, PRP11, PRP19, PRP21, PRP22, PRP45, PRP46, SLU7, SMB1, SMD1, SMD2, SMD3, SMX2, SMX3, SNT309, SNU114, SPP2, SYF1, SYF2, RSE1 and YJU2.

The protein resides in the nucleus. MRNA splicing factors, PRP9, PRP11, and PRP21, are necessary for binding of the U2 snRNP to the pre-mRNA in an early step of spliceosome assembly. The chain is Pre-mRNA-splicing factor PRP9 (PRP9) from Saccharomyces cerevisiae (strain ATCC 204508 / S288c) (Baker's yeast).